A 910-amino-acid polypeptide reads, in one-letter code: Disease susceptibility protein LOV1 (910 aa).

The stretch at 22 to 60 (ARLNGIGEQVDGLKRQLGRLQSLLKDADAKKHESERVRN) forms a coiled coil. Residues 169–461 (EQSVEALAGH…AAEGIITSSD (293 aa)) form the NB-ARC domain. LRR repeat units follow at residues 584-609 (LPLLRVLDLSRVKFEGGKLPSSIGDL), 610-632 (IHLRFLSLHRAWISHLPSSLRNL), 634-655 (LLLYLNLGFNGMVHVPNVLKEM), 700-725 (MTKLRELSLFITDGSSDTLSSSLGQL), 726-751 (RSLEVLHLYDRQEPRVAYHGGEIVLN), and 847-871 (MPLLRALTICNCRKLKLPGGINYIT).

Belongs to the disease resistance NB-LRR family. RPP8/HRT subfamily.

Confers susceptibility to the fungus Cochliobolus victoriae by conditioning victorin-dependent (victorin is a toxin synthesized by C.victoriae) induction of defense-associated proteins. This Arabidopsis thaliana (Mouse-ear cress) protein is Disease susceptibility protein LOV1 (LOV1).